A 259-amino-acid chain; its full sequence is MFLIDDTALMALIREDVPAGDLTTRSLGLAAEAGELTMRARGAMTVACSEEAVRILQLLGAEAWIATASGRQVEGGEMLLFARGQVEALLAGWKVAQNLIEWASGLASSATAIVAAARAVNPAVTVACTRKSVPGTRALSLRAVTVGGATVHRTGLSDSVLLFAEHRAFGGADALAAQIARLRASCPERKVVVEVADVAEALAAAQAGAEVLQLEKFPPEQVAAVVAGLGPDWRGHVAAAGGITAANAAPMRRRGRRFW.

The protein belongs to the NadC/ModD family.

In Rhodobacter capsulatus (Rhodopseudomonas capsulata), this protein is Putative pyrophosphorylase ModD (modD).